Here is a 316-residue protein sequence, read N- to C-terminus: tRNA dimethylallyltransferase (316 aa).

27 to 34 (GATATGKT) is an ATP binding site. 29–34 (TATGKT) contributes to the substrate binding site. The interval 52–55 (DSRQ) is interaction with substrate tRNA.

Belongs to the IPP transferase family. Monomer. The cofactor is Mg(2+).

It catalyses the reaction adenosine(37) in tRNA + dimethylallyl diphosphate = N(6)-dimethylallyladenosine(37) in tRNA + diphosphate. Its function is as follows. Catalyzes the transfer of a dimethylallyl group onto the adenine at position 37 in tRNAs that read codons beginning with uridine, leading to the formation of N6-(dimethylallyl)adenosine (i(6)A). The polypeptide is tRNA dimethylallyltransferase (Treponema pallidum (strain Nichols)).